The sequence spans 132 residues: Ribosome-binding factor A (132 aa).

Belongs to the RbfA family. As to quaternary structure, monomer. Binds 30S ribosomal subunits, but not 50S ribosomal subunits or 70S ribosomes.

It is found in the cytoplasm. Its function is as follows. One of several proteins that assist in the late maturation steps of the functional core of the 30S ribosomal subunit. Associates with free 30S ribosomal subunits (but not with 30S subunits that are part of 70S ribosomes or polysomes). Required for efficient processing of 16S rRNA. May interact with the 5'-terminal helix region of 16S rRNA. The protein is Ribosome-binding factor A of Pseudomonas putida (strain ATCC 700007 / DSM 6899 / JCM 31910 / BCRC 17059 / LMG 24140 / F1).